We begin with the raw amino-acid sequence, 113 residues long: U11-theraphotoxin-Hhn1n (113 aa).

Positions 1–21 (MNTVRVTFLLVFVLAVSLGQA) are cleaved as a signal peptide. Residues 22 to 74 (DKDENRMEMQEKTEQGKSYLDFAENLLLQKLEELEAKLLEEDSEESRNSRQKR) constitute a propeptide that is removed on maturation. The span at 60–69 (LEEDSEESRN) shows a compositional bias: basic and acidic residues. Residues 60-83 (LEEDSEESRNSRQKRCIGEGVPCD) are disordered. Disulfide bonds link Cys-75/Cys-90 and Cys-89/Cys-110.

Belongs to the neurotoxin 14 (magi-1) family. 01 (HNTX-16) subfamily. Expressed by the venom gland.

It localises to the secreted. In terms of biological role, probable ion channel inhibitor. This Cyriopagopus hainanus (Chinese bird spider) protein is U11-theraphotoxin-Hhn1n.